Consider the following 591-residue polypeptide: Autotransporter adhesin NhhA (591 aa).

The first 51 residues, 1–51 (MNKIYRIIWNSALNAWVVVSELTRNHTKRASATVKTAVLATLLFATVQASA), serve as a signal peptide directing secretion. A surface exposed passenger domain region spans residues 52–503 (NNEEQEEDLY…TNVAQLKGVA (452 aa)). Residues 504–591 (QNLNNRIDNV…GASASVGYQW (88 aa)) are translocator domain. 4 beta stranded membrane-spanning segments follow: residues 537–547 (GKSMMAIGGGT), 551–561 (EAGYAIGYSSI), 570–576 (KGTASGN), and 580–591 (HFGASASVGYQW).

Belongs to the autotransporter-2 (AT-2) (TC 1.B.40) family. As to quaternary structure, homotrimer.

Its subcellular location is the cell surface. The protein resides in the cell outer membrane. Involved in adhesion of capsulated meningococci to host epithelial cells. Interacts with laminin and heparan sulfate, promoting the adherence to the extracellular matrix (ECM) components. This chain is Autotransporter adhesin NhhA, found in Neisseria meningitidis serogroup B (strain ATCC BAA-335 / MC58).